The sequence spans 198 residues: GTP cyclohydrolase-2 (198 aa).

Residue 49–53 (RVHSE) participates in GTP binding. The Zn(2+) site is built by cysteine 54, cysteine 65, and cysteine 67. Residues glutamine 70, 92–94 (EGR), and threonine 114 contribute to the GTP site. The active-site Proton acceptor is aspartate 126. Residue arginine 128 is the Nucleophile of the active site. GTP is bound by residues threonine 149 and lysine 154.

The protein belongs to the GTP cyclohydrolase II family. As to quaternary structure, homodimer. Zn(2+) is required as a cofactor.

It catalyses the reaction GTP + 4 H2O = 2,5-diamino-6-hydroxy-4-(5-phosphoribosylamino)-pyrimidine + formate + 2 phosphate + 3 H(+). It participates in cofactor biosynthesis; riboflavin biosynthesis; 5-amino-6-(D-ribitylamino)uracil from GTP: step 1/4. Functionally, catalyzes the conversion of GTP to 2,5-diamino-6-ribosylamino-4(3H)-pyrimidinone 5'-phosphate (DARP), formate and pyrophosphate. The protein is GTP cyclohydrolase-2 of Escherichia fergusonii (strain ATCC 35469 / DSM 13698 / CCUG 18766 / IAM 14443 / JCM 21226 / LMG 7866 / NBRC 102419 / NCTC 12128 / CDC 0568-73).